A 309-amino-acid chain; its full sequence is GTP cyclohydrolase FolE2 (309 aa).

Belongs to the GTP cyclohydrolase IV family.

It carries out the reaction GTP + H2O = 7,8-dihydroneopterin 3'-triphosphate + formate + H(+). It functions in the pathway cofactor biosynthesis; 7,8-dihydroneopterin triphosphate biosynthesis; 7,8-dihydroneopterin triphosphate from GTP: step 1/1. Functionally, converts GTP to 7,8-dihydroneopterin triphosphate. The sequence is that of GTP cyclohydrolase FolE2 from Serratia proteamaculans (strain 568).